Consider the following 459-residue polypeptide: Kelch-like protein terF (459 aa).

6 Kelch repeats span residues 92–144, 145–196, 198–248, 251–304, 306–354, and 355–405; these read STVV…LVGD, EIFV…VVDG, IYYL…TVVV, TIYL…IYRD, LYIL…TIGS, and LIFT…VYKG.

Its pathway is secondary metabolite biosynthesis. Kelch-like protein; part of the gene cluster that mediates the biosynthesis of terrein, a fungal metabolite with ecological, antimicrobial, antiproliferative, and antioxidative activities. The first step in the pathway is performed by the polyketide synthase terA that produces 4-hydroxy-6-methylpyranon (4-HMP), orsellinic acid (OA), and 2,3-dehydro-6-hydroxymellein (2,3-dehydro-6-HM) by condensing acetyl-CoA with two, three, or four malonyl-CoA units, respectively. 4-HMP and OA are not pathway intermediates, but are rather shunt or side products. 2,3-dehydro-6-HM is further converted to 6-hydroxymellein (6-HM) by the 6-hydroxymellein synthase terB. The monooxygenases terC and terD, the multicopper oxidase terE and the Kelch-like protein terF are then involved in the transformation of 6-HM to terrein. Even if they are co-regulated with the other terrein cluster genes, terH and terI seem to be dispensable for terrein production; whereas one or both of the 2 transporters terG and terJ are probably required for efficient secretion of metabolites. The sequence is that of Kelch-like protein terF from Aspergillus terreus (strain NIH 2624 / FGSC A1156).